The primary structure comprises 925 residues: MEGAQESPAESGSSVPWSEEPAGSAKVPEVSLSEESEGCTRPLEATPPKLCGYLSKFGGKGPIRGWKSRWFFFDERKCHLYYSRTAQDANPLDSIDLSSAVFDCKADAEEGTFEIKTPNRIITLKAATKQAMLYWLQQLQMKRWEFHNSLPALPAAHDAALAGNGPALRLELEQEEEEEEAFLCPVKTPTDLVGVAAAWQPVHARPLALQNISLKHLGTEIQNTMCNIRGNKQTQGANHRPPGEDSPLIEETQREEQPSPPGPGAPGKDPANSLKSSLTTSLIRKAKSQSNTFPLFSEGLMRNRTAQEKVLALEQQVLMLTKELKAQKELVKILHKALEAAQQEKRVSSAYLAAAQDKDRLELVRHKVRQIAELGRRVEALERERESLAQTASLQEQEIRELQQHVQLLLDKNQAKQQVICKLSEKVTQDFMKAPEEADRDFLSQQEKMEHLKDDMEAYRTQNRFLNSEIHQVTKIWRKVAEKEKALLMKCAYLQAQNCQVESKYLAGLRRLQEALGVEAGECSELLRQLIQEALQWEASEASADSVVLSPSTISEYDEYGFLTVPNYEVEDLRLLAKIQALEVHSHHLLAHEAVERPLRERWATLGELAPSAELKQLLRAGVPHEHRPRVWRWLIRLRVQHLQAPGCYQALLSRGQACKHSAARQIELDLNRTFPNNKHFTCPTSSFPDKLRRVLLAFSWQNPTIGYCQGLNRLAAIALLVLDEEESAFWCLVAIVETIMPADYYSKTLLASQVDQRVLQDLLLEKLPRLMAHLGQRHVDLSFITFNWFLVVFADSLISNILLQVWDAFLYEGIKVVFRYALAIFKYNEEALLRLQDSLEIYQYLHFFTKTICDSRKLMHIAFNDMNPFPMKQLRQLRAAHRERLEAELNELEQLKAEYLETRAAQGPAVPEGSPSEDEGEAEP.

At Met-1 the chain carries N-acetylmethionine. Residues 1-41 are disordered; that stretch reads MEGAQESPAESGSSVPWSEEPAGSAKVPEVSLSEESEGCTR. Residues 1–171 form an interaction with CADH1 region; that stretch reads MEGAQESPAE…AGNGPALRLE (171 aa). The region spanning 47 to 144 is the PH domain; that stretch reads PPKLCGYLSK…WLQQLQMKRW (98 aa). Residues 231 to 278 form a disordered region; that stretch reads NKQTQGANHRPPGEDSPLIEETQREEQPSPPGPGAPGKDPANSLKSSL. Residues 297–435 form an interaction with RAC1 region; it reads SEGLMRNRTA…KVTQDFMKAP (139 aa). A coiled-coil region spans residues 302-475; it reads RNRTAQEKVL…LNSEIHQVTK (174 aa). In terms of domain architecture, Rab-GAP TBC spans 622-814; it reads GVPHEHRPRV…QVWDAFLYEG (193 aa). The stretch at 872 to 907 forms a coiled coil; it reads MKQLRQLRAAHRERLEAELNELEQLKAEYLETRAAQ. The tract at residues 904–925 is disordered; it reads RAAQGPAVPEGSPSEDEGEAEP. Residues 916–925 are compositionally biased toward acidic residues; sequence PSEDEGEAEP. Ser-917 bears the Phosphoserine mark.

As to quaternary structure, interacts with activated RAC1 and CDH1.

The protein localises to the cytoplasm. It is found in the cytoplasmic vesicle. The protein resides in the cell junction. May act as a GTPase-activating protein for Rab family protein(s). Signal effector acting as a linker between RAC1 and RAB7A, leading to RAB7A inactivation and further inhibition of cadherin degradation. The polypeptide is TBC1 domain family member 2A (TBC1D2) (Bos taurus (Bovine)).